The sequence spans 270 residues: Ribitol operon repressor (270 aa).

The HTH lacI-type domain maps to 1 to 61 (MKKITIYDLA…INRQASMLRS (61 aa)). Positions 6–25 (IYDLAELSGVSASAVSAILN) form a DNA-binding region, H-T-H motif.

In terms of biological role, repressor for the genes of the ribitol operon. Binds D-ribulose as an inducer. The polypeptide is Ribitol operon repressor (rbtR) (Klebsiella aerogenes (Enterobacter aerogenes)).